The chain runs to 670 residues: Carnitine O-acetyltransferase, mitochondrial (670 aa).

His-378 (proton acceptor) is an active-site residue. CoA-binding positions include Lys-461 and Lys-465–Asp-472. Residue Tyr-494 participates in (R)-carnitine binding. Ser-498 is a binding site for CoA. Thr-507 is a (R)-carnitine binding site. CoA is bound at residue Gln-597. Residues Ala-668 to Leu-670 carry the Microbody targeting signal motif.

It belongs to the carnitine/choline acetyltransferase family.

It localises to the mitochondrion inner membrane. The protein resides in the peroxisome. It catalyses the reaction (R)-carnitine + acetyl-CoA = O-acetyl-(R)-carnitine + CoA. In terms of biological role, carnitine acetylase is specific for short chain fatty acids. Carnitine acetylase seems to affect the flux through the pyruvate dehydrogenase complex. It may be involved as well in the transport of acetyl-CoA into mitochondria. The sequence is that of Carnitine O-acetyltransferase, mitochondrial (CAT2) from Saccharomyces cerevisiae (strain ATCC 204508 / S288c) (Baker's yeast).